A 227-amino-acid polypeptide reads, in one-letter code: PKHD-type hydroxylase Bxeno_B2194 (227 aa).

In terms of domain architecture, Fe2OG dioxygenase spans 78 to 178 (KVFPPLFNRY…RVASFFWIQS (101 aa)). Fe cation contacts are provided by His-96, Asp-98, and His-159. Arg-169 serves as a coordination point for 2-oxoglutarate.

Fe(2+) serves as cofactor. L-ascorbate is required as a cofactor.

This is PKHD-type hydroxylase Bxeno_B2194 from Paraburkholderia xenovorans (strain LB400).